A 1435-amino-acid polypeptide reads, in one-letter code: Guanine nucleotide exchange factor LTE1 (1435 aa).

The N-terminal Ras-GEF domain occupies 25–157; it reads VSKPVNSADL…SCIINLKKNW (133 aa). Positions 235–256 are disordered; sequence KLQSSNSSKNQRSPSMLLFPDN. Positions 237 to 249 are enriched in low complexity; the sequence is QSSNSSKNQRSPS. S271 bears the Phosphoserine mark. Residues 338–365 are disordered; sequence QSGTLQGTSTTSSLDNNSNSNSRSNTSS. S559 is subject to Phosphoserine. Residues 582–606 show a composition bias toward basic and acidic residues; it reads KDNSSSRTDENGPQRLLFHETDKTN. Positions 582 to 689 are disordered; the sequence is KDNSSSRTDE…VRNIVNNTDS (108 aa). The span at 621-632 shows a compositional bias: polar residues; sequence SQSQKSMTSSPL. Positions 654 to 667 are enriched in low complexity; that stretch reads SITYSYDSELSSSS. S689 carries the phosphoserine modification. A Phosphothreonine modification is found at T691. Positions 723 to 744 are enriched in basic and acidic residues; the sequence is EKNYDNKENQESEYESTKKLDN. The disordered stretch occupies residues 723-747; that stretch reads EKNYDNKENQESEYESTKKLDNSLD. Phosphoserine occurs at positions 808 and 810. Positions 851–871 are disordered; the sequence is AQNSPLKQTQNPQREFPNGTS. S1028 and S1109 each carry phosphoserine. The Ras-GEF domain occupies 1194–1434; the sequence is DSLSVAQQMT…LTQEEINELS (241 aa).

The protein belongs to the LTE1 family. As to quaternary structure, interacts with CDC24, CDC42, KEL1, KEL2, RAS2 and TEM1. In terms of processing, phosphorylated by CDC28 in a cell cycle-dependent manner and in response to nocodazole. Dephosphorylion by CDC14 triggers LTE1 release from bud cortex during the exit of mitosis.

The protein resides in the cytoplasm. Its subcellular location is the bud. Its function is as follows. GDP-GTP exchange factor for TEM1, a Ras-like protein, component of the mitotic exit network (MEN). Activation of TEM1 by LTE1 in the bud ultimately leads to activation of CDC15 followed by the release of CDC14 from the nucleolus, which then inactivates cyclin-dependent kinases (CDKs) activity by several mechanism. Required for TEM1 localization to the bud cortex during mitotic exit. Fine-tunes the timing of the mitotic exit and couples this event with cytokinesis. In terms of biological role, involved in proprotein-processing like proalpha factor-processing in the secretory pathway. This chain is Guanine nucleotide exchange factor LTE1 (LTE1), found in Saccharomyces cerevisiae (strain ATCC 204508 / S288c) (Baker's yeast).